The sequence spans 392 residues: 1-deoxy-D-xylulose 5-phosphate reductoisomerase (392 aa).

NADPH is bound by residues threonine 10, glycine 11, serine 12, isoleucine 13, arginine 37, glutamine 38, and asparagine 124. A 1-deoxy-D-xylulose 5-phosphate-binding site is contributed by lysine 125. Residue glutamate 126 coordinates NADPH. Mn(2+) is bound at residue aspartate 150. Positions 151, 152, 179, and 202 each coordinate 1-deoxy-D-xylulose 5-phosphate. A Mn(2+)-binding site is contributed by glutamate 152. Glycine 208 serves as a coordination point for NADPH. The 1-deoxy-D-xylulose 5-phosphate site is built by serine 215, asparagine 220, lysine 221, and glutamate 224. Glutamate 224 is a Mn(2+) binding site.

This sequence belongs to the DXR family. The cofactor is Mg(2+). Requires Mn(2+) as cofactor.

It carries out the reaction 2-C-methyl-D-erythritol 4-phosphate + NADP(+) = 1-deoxy-D-xylulose 5-phosphate + NADPH + H(+). It functions in the pathway isoprenoid biosynthesis; isopentenyl diphosphate biosynthesis via DXP pathway; isopentenyl diphosphate from 1-deoxy-D-xylulose 5-phosphate: step 1/6. Catalyzes the NADPH-dependent rearrangement and reduction of 1-deoxy-D-xylulose-5-phosphate (DXP) to 2-C-methyl-D-erythritol 4-phosphate (MEP). The sequence is that of 1-deoxy-D-xylulose 5-phosphate reductoisomerase from Cupriavidus metallidurans (strain ATCC 43123 / DSM 2839 / NBRC 102507 / CH34) (Ralstonia metallidurans).